Here is a 495-residue protein sequence, read N- to C-terminus: Trigger factor (495 aa).

Positions 162 to 243 (DDFVSIDLSA…VKSLKERELP (82 aa)) constitute a PPIase FKBP-type domain. The span at 425-437 (DTDGNEIDPKEYF) shows a compositional bias: basic and acidic residues. The segment at 425–495 (DTDGNEIDPK…TDDDSENAEK (71 aa)) is disordered. Residues 450–461 (SADAEASENSEA) are compositionally biased toward low complexity. Residues 486-495 (TDDDSENAEK) show a composition bias toward acidic residues.

Belongs to the FKBP-type PPIase family. Tig subfamily.

The protein localises to the cytoplasm. It catalyses the reaction [protein]-peptidylproline (omega=180) = [protein]-peptidylproline (omega=0). Involved in protein export. Acts as a chaperone by maintaining the newly synthesized protein in an open conformation. Functions as a peptidyl-prolyl cis-trans isomerase. The polypeptide is Trigger factor (Corynebacterium kroppenstedtii (strain DSM 44385 / JCM 11950 / CIP 105744 / CCUG 35717)).